The chain runs to 167 residues: Large ribosomal subunit protein uL10 (167 aa).

The protein belongs to the universal ribosomal protein uL10 family. Part of the ribosomal stalk of the 50S ribosomal subunit. The N-terminus interacts with L11 and the large rRNA to form the base of the stalk. The C-terminus forms an elongated spine to which L12 dimers bind in a sequential fashion forming a multimeric L10(L12)X complex.

In terms of biological role, forms part of the ribosomal stalk, playing a central role in the interaction of the ribosome with GTP-bound translation factors. This is Large ribosomal subunit protein uL10 from Yersinia enterocolitica serotype O:8 / biotype 1B (strain NCTC 13174 / 8081).